A 95-amino-acid polypeptide reads, in one-letter code: Alpha-bungarotoxin isoform V31 (95 aa).

The first 21 residues, Met-1–Thr-21, serve as a signal peptide directing secretion. 5 disulfides stabilise this stretch: Cys-24–Cys-44, Cys-37–Cys-65, Cys-50–Cys-54, Cys-69–Cys-80, and Cys-81–Cys-86.

It belongs to the three-finger toxin family. Long-chain subfamily. Type II alpha-neurotoxin sub-subfamily. In terms of assembly, monomer in solution, homodimer in crystal state. Expressed by the venom gland.

Its subcellular location is the secreted. Its function is as follows. Binds with high affinity to muscular (alpha-1/CHRNA1) and neuronal (alpha-7/CHRNA7) nicotinic acetylcholine receptor (nAChR) and inhibits acetylcholine from binding to the receptor, thereby impairing neuromuscular and neuronal transmission. The chain is Alpha-bungarotoxin isoform V31 from Bungarus multicinctus (Many-banded krait).